The primary structure comprises 1440 residues: MAFLCAPGLTFFLTYSIFSAVLGMLQFGYNTGVINAPEKNIENFMKDVYKDRYGEDISEEFIQQLYSVAVSIFAIGGMLGGFSGGWMANRFGRKGGLLLNNVLGIAGACLMGFTKVSHSYEMLFLGRFIIGVNCGLNTSLVPMYISEIAPLNLRGGLGTVNQLAVTVGLLLSQVLGIEQILGTNEGWPILLGLAICPAILQLILLPVCPESPRYLLITKQWEEEARKALRRLRASGSVEEDIEEMRAEERAQQSESHISTMELICSPTLRPPLIIGIVMQLSQQFSGINAVFYYSTSLFMSSGLTEESAKFATIGIGAIMVVMTLVSIPLMDRTGRRTLHLYGLGGMFIFSIFITISFLIKEMIDWMSYLSVVATLGFVVFFAVGPGSIPWMITAELFSQGPRPSAMAIAVLVNWMANFVVGIGFPSMKTALENYTFLPFSVFLAIFWIFTYKKVPETKNKTFEEILALFRHNNGRSMLNCTNSLEPQSMNSGIEHAALMVSEEKTQHDSLFGTTSFSLTVEGMGPYPLSDSTNLLGPGSSSYGPGGVLGLAGSGSGLGGQCYTNYGTNLQTPQAARKCHYDEVDDYSFRRHSAHGRITQMKGKPLILGPTIKKDKKKERTDWLTASERFLEGGRSTHQGRSAASAPHHPRQPPPVCPSSGPXLRSASPPDSASVRSTSRAEEPHQPQQVHHQQQQVHHQQQHQSRYATHEYVHCSYEKEVVCDQANPSQAPPQQPAPPVQQHQQQPPPPLHHCQQRKHSHSPHHSRHTSPHSHHHHSHHSRHSRRSRRQGSGSLPGAHQGSANHSVMRPSICTSRRHRSVTDISTTNVCQDPACSDREVQEIMVRRTCCNTTATNSSSRTELAQCFAEDLYGSSRRPSSCCTSSDYCYQTDSTSLYGSRSSLSRNNSIKSASALVRKHHRSQRSLLPEHRHPSYTSISLRGLNASRPNSQLGSLTSIFDRAKNMAPEGSTLERQSSKGALGSSELPEYACSPSPIRWSFLADGRSPSEMEGAVGGGPEREQEEEDKLDAWQVPEPEPEKKPCRKITTSSSVYDEGPSTSAAAARKRRGSKGSRGSKGSGSYHCEFEDEATTTVMFHQDAGEAYNNCCSNNYNYIQCNTYLDQDLQITSEDIHQYLSKGDATASDILNNSKNYPFQPSNALEFQYKNNFQQGQANANNNNTNTTNTASSDAAECFQNYRAISKETNLNQTSTEQLSPTNINLSTSSNNINIVFSSSLERNANEVKFINNRSGASGGSEMGCEVGHHAGYLPYTYPSYDYTNMSGNSHFEKPLGIDELPKEFCGLEGAGGGGASTTSEHSSSLPSPQPLTHHQQLHHFESFDAASEHNLLAAQPMSPGSPLSGSVNPAGDDFVQMHHYHHANSPHSQSHHSHAHTHTHGHHVHHLLNHPAYDLTDDQFRLGSALKRVRKRARKYTDFLRKK.

The signal sequence occupies residues 1-23 (MAFLCAPGLTFFLTYSIFSAVLG). Over 24–67 (MLQFGYNTGVINAPEKNIENFMKDVYKDRYGEDISEEFIQQLYS) the chain is Cytoplasmic. A helical transmembrane segment spans residues 68–88 (VAVSIFAIGGMLGGFSGGWMA). Over 89-95 (NRFGRKG) the chain is Extracellular. Residues 96-116 (GLLLNNVLGIAGACLMGFTKV) form a helical membrane-spanning segment. The Cytoplasmic segment spans residues 117 to 127 (SHSYEMLFLGR). Residues 128–148 (FIIGVNCGLNTSLVPMYISEI) traverse the membrane as a helical segment. The Extracellular segment spans residues 149–162 (APLNLRGGLGTVNQ). D-glucose is bound at residue Q162. Residues 163–183 (LAVTVGLLLSQVLGIEQILGT) traverse the membrane as a helical segment. At 184 to 186 (NEG) the chain is on the cytoplasmic side. Residues 187–207 (WPILLGLAICPAILQLILLPV) form a helical membrane-spanning segment. At 208-272 (CPESPRYLLI…LICSPTLRPP (65 aa)) the chain is on the extracellular side. The chain crosses the membrane as a helical span at residues 273 to 293 (LIIGIVMQLSQQFSGINAVFY). D-glucose is bound by residues 283-284 (QQ) and N289. Residues 294–310 (YSTSLFMSSGLTEESAK) lie on the Cytoplasmic side of the membrane. A helical membrane pass occupies residues 311 to 331 (FATIGIGAIMVVMTLVSIPLM). Over 332 to 339 (DRTGRRTL) the chain is Extracellular. A helical transmembrane segment spans residues 340–360 (HLYGLGGMFIFSIFITISFLI). Over 361 to 372 (KEMIDWMSYLSV) the chain is Cytoplasmic. A helical transmembrane segment spans residues 373-393 (VATLGFVVFFAVGPGSIPWMI). Position 391 (W391) interacts with D-glucose. Residues 394–405 (TAELFSQGPRPS) lie on the Extracellular side of the membrane. A helical transmembrane segment spans residues 406-426 (AMAIAVLVNWMANFVVGIGFP). Residues 427–429 (SMK) lie on the Cytoplasmic side of the membrane. The helical transmembrane segment at 430–450 (TALENYTFLPFSVFLAIFWIF) threads the bilayer. Residues 451–534 (TYKKVPETKN…GPYPLSDSTN (84 aa)) are Extracellular-facing. N460 and N480 each carry an N-linked (GlcNAc...) asparagine glycan. A helical transmembrane segment spans residues 535-555 (LLGPGSSSYGPGGVLGLAGSG). Residues 556-1440 (SGLGGQCYTN…RKYTDFLRKK (885 aa)) are Cytoplasmic-facing. Disordered stretches follow at residues 628-708 (ERFL…SRYA), 725-808 (QANP…HSVM), 966-987 (APEG…SELP), 1000-1083 (FLAD…GSYH), 1304-1330 (LEGA…PLTH), and 1380-1401 (ANSP…GHHV). Residues 669-678 (PPDSASVRST) show a composition bias toward polar residues. Positions 686–704 (QPQQVHHQQQQVHHQQQHQ) are enriched in low complexity. Residues 730-739 (QAPPQQPAPP) are compositionally biased toward pro residues. Over residues 754–789 (CQQRKHSHSPHHSRHTSPHSHHHHSHHSRHSRRSRR) the composition is skewed to basic residues. Low complexity predominate over residues 1313-1330 (STTSEHSSSLPSPQPLTH).

It belongs to the major facilitator superfamily. Sugar transporter (TC 2.A.1.1) family. Glucose transporter subfamily.

Its subcellular location is the membrane. In terms of biological role, facilitative glucose transporter. This Drosophila melanogaster (Fruit fly) protein is Glucose transporter type 1 (Glut1).